Consider the following 329-residue polypeptide: 4-hydroxythreonine-4-phosphate dehydrogenase (329 aa).

Substrate-binding residues include H136 and T137. A divalent metal cation is bound by residues H166, H211, and H266. Residues K274, N283, and R292 each coordinate substrate.

Belongs to the PdxA family. As to quaternary structure, homodimer. Requires Zn(2+) as cofactor. The cofactor is Mg(2+). Co(2+) serves as cofactor.

Its subcellular location is the cytoplasm. The catalysed reaction is 4-(phosphooxy)-L-threonine + NAD(+) = 3-amino-2-oxopropyl phosphate + CO2 + NADH. It functions in the pathway cofactor biosynthesis; pyridoxine 5'-phosphate biosynthesis; pyridoxine 5'-phosphate from D-erythrose 4-phosphate: step 4/5. Functionally, catalyzes the NAD(P)-dependent oxidation of 4-(phosphooxy)-L-threonine (HTP) into 2-amino-3-oxo-4-(phosphooxy)butyric acid which spontaneously decarboxylates to form 3-amino-2-oxopropyl phosphate (AHAP). The protein is 4-hydroxythreonine-4-phosphate dehydrogenase of Escherichia coli (strain 55989 / EAEC).